The following is a 228-amino-acid chain: Triosephosphate isomerase (228 aa).

11 to 13 (NFK) contacts substrate. Histidine 95 acts as the Electrophile in catalysis. Glutamate 143 functions as the Proton acceptor in the catalytic mechanism. Substrate is bound by residues isoleucine 148, glycine 183, and 204–205 (AS).

This sequence belongs to the triosephosphate isomerase family. As to quaternary structure, homotetramer; dimer of dimers.

The protein localises to the cytoplasm. The enzyme catalyses D-glyceraldehyde 3-phosphate = dihydroxyacetone phosphate. The protein operates within carbohydrate biosynthesis; gluconeogenesis. It functions in the pathway carbohydrate degradation; glycolysis; D-glyceraldehyde 3-phosphate from glycerone phosphate: step 1/1. In terms of biological role, involved in the gluconeogenesis. Catalyzes stereospecifically the conversion of dihydroxyacetone phosphate (DHAP) to D-glyceraldehyde-3-phosphate (G3P). This is Triosephosphate isomerase from Pyrococcus abyssi (strain GE5 / Orsay).